We begin with the raw amino-acid sequence, 81 residues long: MDSQLSENLLKCVNETYRGAMLVRNGLPIATAGDVNAEEQRVICEWNSNAVSEVLHLHDSNTKILIATKESCVLGLIYRNT.

This is an uncharacterized protein from Schizosaccharomyces pombe (strain 972 / ATCC 24843) (Fission yeast).